A 255-amino-acid chain; its full sequence is Aprataxin and PNK-like factor (255 aa).

Low complexity predominate over residues 1–11 (MSATDASTADS). Disordered regions lie at residues 1–117 (MSAT…VSSS), 131–168 (RRNPAHRSAEAHPGDQDYRRPNFPAPPLGTPACPFGNA), and 195–255 (RLRQ…DDYD). 3 stretches are compositionally biased toward basic and acidic residues: residues 12-22 (GAKRKSSEDIT), 40-64 (KSEEPVASIKDETNPEVPMKIKAEP), and 137-150 (RSAEAHPGDQDYRR). 2 PBZ-type zinc fingers span residues 121 to 142 (TSCRFGIRCYRRNPAHRSAEAH) and 161 to 182 (PACPFGNACYRRNPVHFQDYSH). Over residues 207–218 (DDSGTDEEDEPF) the composition is skewed to acidic residues. Residues 221–230 (DNDRDADYRP) show a composition bias toward basic and acidic residues. Acidic residues predominate over residues 234–244 (INEDEDDELEF).

This sequence belongs to the APLF family.

In terms of biological role, displays apurinic-apyrimidinic (AP) endonuclease and 3'-5' exonuclease activities in vitro. This is Aprataxin and PNK-like factor from Drosophila melanogaster (Fruit fly).